We begin with the raw amino-acid sequence, 260 residues long: Acyl-[acyl-carrier-protein]--UDP-N-acetylglucosamine O-acyltransferase (260 aa).

This sequence belongs to the transferase hexapeptide repeat family. LpxA subfamily. As to quaternary structure, homotrimer.

It is found in the cytoplasm. The catalysed reaction is a (3R)-hydroxyacyl-[ACP] + UDP-N-acetyl-alpha-D-glucosamine = a UDP-3-O-[(3R)-3-hydroxyacyl]-N-acetyl-alpha-D-glucosamine + holo-[ACP]. The protein operates within glycolipid biosynthesis; lipid IV(A) biosynthesis; lipid IV(A) from (3R)-3-hydroxytetradecanoyl-[acyl-carrier-protein] and UDP-N-acetyl-alpha-D-glucosamine: step 1/6. Functionally, involved in the biosynthesis of lipid A, a phosphorylated glycolipid that anchors the lipopolysaccharide to the outer membrane of the cell. The polypeptide is Acyl-[acyl-carrier-protein]--UDP-N-acetylglucosamine O-acyltransferase (Sulfurovum sp. (strain NBC37-1)).